The following is a 750-amino-acid chain: MIIRSPEPEVKILVDRDPIKTSFEEWAKPGHFSRTIAKGPDTTTWIWNLHADAHDFDSHTSDLEEISRKVFSAHFGQLSIIFLWLSGMYFHGARFSNYEAWLSDPTHIGPSAQVVWPIVGQEILNGDVGGGFRGIQITSGFFQIWRASGITSELQLYCTAIGALVFAALMLFAGWFHYHKAAPKLAWFQDVESMLNHHLAGLLGLGSLSWAGHQVHVSLPINQFLNAGVDPKEIPLPHEFILNRDLLAQLYPSFAEGATPFFTLNWSKYSEFLTFRGGLDPVTGGLWLTDIAHHHLAIAILFLIAGHMYRTNWGIGHGLKDILEAHKGPFTGQGHKGLYEILTTSWHAQLSLNLAMLGSLTIVVAHHMYSMPPYPYLATDYATQLSLFTHHMWIGGFLIVGAAAHAAIFMVRDYDPTNRYNDLLDRVLRHRDAIISHLNWVCIFLGFHSFGLYIHNDTMSALGRPQDMFSDTAIQLQPVFAQWIQNTHALAPGVTAPGETASTSLTWGGGELVAVGGKVALLPIPLGTADFLVHHIHAFTIHVTVLILLKGVLFARSSRLIPDKANLGFRFPCDGPGRGGTCQVSAWDHVFLGLFWMYNAISVVIFHFSWKMQSDVWGSISDQGVVTHITGGNFAQSSITINGWLRDFLWAQASQVIQSYGSSLSAYGLFFLGAHFVWAFSLMFLFSGRGYWQELIESIVWAHNKLKVAPATQPRALSIVQGRAVGVTHYLLGGIATTWAFFLARIIAVG.

8 helical membrane-spanning segments follow: residues 70–93 (VFSA…FHGA), 156–179 (LYCT…FHYH), 195–219 (LNHH…HVSL), 291–309 (IAHH…GHMY), 346–369 (WHAQ…HHMY), 385–411 (LSLF…IFMV), 433–455 (AIIS…LYIH), and 531–549 (FLVH…LILL). [4Fe-4S] cluster contacts are provided by cysteine 573 and cysteine 582. Helical transmembrane passes span 589 to 610 (HVFL…HFSW) and 664 to 686 (LSAY…MFLF). Position 675 (histidine 675) interacts with chlorophyll a'. Chlorophyll a is bound by residues methionine 683 and tyrosine 691. Position 692 (tryptophan 692) interacts with phylloquinone. A helical transmembrane segment spans residues 724-744 (AVGVTHYLLGGIATTWAFFLA).

This sequence belongs to the PsaA/PsaB family. The PsaA/B heterodimer binds the P700 chlorophyll special pair and subsequent electron acceptors. PSI consists of a core antenna complex that captures photons, and an electron transfer chain that converts photonic excitation into a charge separation. The eukaryotic PSI reaction center is composed of at least 11 subunits. The cofactor is P700 is a chlorophyll a/chlorophyll a' dimer, A0 is one or more chlorophyll a, A1 is one or both phylloquinones and FX is a shared 4Fe-4S iron-sulfur center..

It localises to the plastid. It is found in the chloroplast thylakoid membrane. It carries out the reaction reduced [plastocyanin] + hnu + oxidized [2Fe-2S]-[ferredoxin] = oxidized [plastocyanin] + reduced [2Fe-2S]-[ferredoxin]. In terms of biological role, psaA and PsaB bind P700, the primary electron donor of photosystem I (PSI), as well as the electron acceptors A0, A1 and FX. PSI is a plastocyanin-ferredoxin oxidoreductase, converting photonic excitation into a charge separation, which transfers an electron from the donor P700 chlorophyll pair to the spectroscopically characterized acceptors A0, A1, FX, FA and FB in turn. Oxidized P700 is reduced on the lumenal side of the thylakoid membrane by plastocyanin. This is Photosystem I P700 chlorophyll a apoprotein A1 from Aethionema cordifolium (Lebanon stonecress).